Reading from the N-terminus, the 82-residue chain is Savignygrin (-) (82 aa).

The first 21 residues, 1–21, serve as a signal peptide directing secretion; sequence MQANIFVFAFLLLSVAVAAYG. 3 cysteine pairs are disulfide-bonded: cysteine 26-cysteine 79, cysteine 34-cysteine 59, and cysteine 53-cysteine 75. The Cell attachment site signature appears at 35-37; the sequence is RGD.

Expressed in salivary glands.

It is found in the cytoplasmic vesicle. The protein localises to the secretory vesicle. The protein resides in the secreted. In terms of biological role, tick salivary platelet aggregation inhibitor that plays an important part in the anti-hemostatic strategy of ticks. Inhibits platelet aggregation induced by ADP (IC(50)=130 nM), collagen, the thrombin receptor-activating peptide, and epinephrine, although platelets are activated and their shape changed. Binding to platelets is similar for resting and activated platelets (Kd=50-70 nM). Acts by specifically binding to platelet membrane glycoprotein IIb-IIIa (ITGA2B/ITGB3) in a divalent metal ion dependent manner. In contrast to many disintegrins which only interacts with the beta-3 subunit, this protein interacts with the two subunits (alpha-IIb and beta-3). Also causes disaggregation of aggregated platelets without influencing the activated spherical shape associated with aggregated platelets and causes a decrease in the number of pseudopodia on the activated platelet surface. Does not show any inhibitory activity for the different serine proteases tested. The polypeptide is Savignygrin (-) (Ornithodoros kalahariensis (Tick)).